The following is a 227-amino-acid chain: Lipoprotein-releasing system ATP-binding protein LolD (227 aa).

The ABC transporter domain occupies 7–227 (LKLTGVERHY…TISDGKVVEF (221 aa)). 43–50 (APSGTGKS) serves as a coordination point for ATP.

Belongs to the ABC transporter superfamily. Lipoprotein translocase (TC 3.A.1.125) family. As to quaternary structure, the complex is composed of two ATP-binding proteins (LolD) and two transmembrane proteins (LolC and LolE).

The protein resides in the cell inner membrane. Its function is as follows. Part of the ABC transporter complex LolCDE involved in the translocation of mature outer membrane-directed lipoproteins, from the inner membrane to the periplasmic chaperone, LolA. Responsible for the formation of the LolA-lipoprotein complex in an ATP-dependent manner. The polypeptide is Lipoprotein-releasing system ATP-binding protein LolD (Rhizobium etli (strain ATCC 51251 / DSM 11541 / JCM 21823 / NBRC 15573 / CFN 42)).